We begin with the raw amino-acid sequence, 190 residues long: B3 domain-containing protein At1g49475 (190 aa).

Positions 1 to 27 (MRNMHTNRRSPGPITSAATQRRLKPEP) are disordered. The TF-B3 DNA-binding region spans 33 to 125 (KFIKIILLSR…CFRVVIFDVS (93 aa)).

The protein resides in the nucleus. This is B3 domain-containing protein At1g49475 from Arabidopsis thaliana (Mouse-ear cress).